The sequence spans 314 residues: Homoserine O-succinyltransferase (314 aa).

The active-site Acyl-thioester intermediate is the Cys142. Substrate-binding residues include Lys163 and Ser192. His235 serves as the catalytic Proton acceptor. Residue Glu237 is part of the active site. Arg249 lines the substrate pocket.

It belongs to the MetA family.

It is found in the cytoplasm. It catalyses the reaction L-homoserine + succinyl-CoA = O-succinyl-L-homoserine + CoA. Its pathway is amino-acid biosynthesis; L-methionine biosynthesis via de novo pathway; O-succinyl-L-homoserine from L-homoserine: step 1/1. Its function is as follows. Transfers a succinyl group from succinyl-CoA to L-homoserine, forming succinyl-L-homoserine. The chain is Homoserine O-succinyltransferase from Shewanella sediminis (strain HAW-EB3).